We begin with the raw amino-acid sequence, 342 residues long: MAELFYDDDADLSVIQRKKVAVIGYGSQGHAHALNLRDSGVDVRVGLREGSASRAKAENEGLKVLTVPEAVKEADVVVILAPDQHQRGLYTADIEPNLNPGTTLVFGHGFNIRYGYIKPSADLDVVMVAPKGPGHLVRREYVDGRGVPVIVAVEQDATGGAWELALSYAKAIGGLRAAGIKTTFTEETETDLFGEQAVLCGGVSQLVQYGFETLTEAGYQPEVAYFEVLHELKLIVDLMYEGGIAKQRWSVSDTAEYGDYVSGPRVIDPRVKENMQAVLADVQNGAFAARFIADQDAGAPEFAELRAKGEAHPIEGVGRELRKLFAWVKPSDSDYTEGSAAR.

A KARI N-terminal Rossmann domain is found at 2 to 182 (AELFYDDDAD…GGLRAAGIKT (181 aa)). NADP(+) contacts are provided by residues 25–28 (YGSQ), R48, S51, S53, and 83–86 (DQHQ). H108 is an active-site residue. G134 is an NADP(+) binding site. One can recognise a KARI C-terminal knotted domain in the interval 183-328 (TFTEETETDL…RELRKLFAWV (146 aa)). Mg(2+)-binding residues include D191, E195, E227, and E231. S252 contributes to the substrate binding site.

It belongs to the ketol-acid reductoisomerase family. The cofactor is Mg(2+).

It carries out the reaction (2R)-2,3-dihydroxy-3-methylbutanoate + NADP(+) = (2S)-2-acetolactate + NADPH + H(+). It catalyses the reaction (2R,3R)-2,3-dihydroxy-3-methylpentanoate + NADP(+) = (S)-2-ethyl-2-hydroxy-3-oxobutanoate + NADPH + H(+). It functions in the pathway amino-acid biosynthesis; L-isoleucine biosynthesis; L-isoleucine from 2-oxobutanoate: step 2/4. It participates in amino-acid biosynthesis; L-valine biosynthesis; L-valine from pyruvate: step 2/4. In terms of biological role, involved in the biosynthesis of branched-chain amino acids (BCAA). Catalyzes an alkyl-migration followed by a ketol-acid reduction of (S)-2-acetolactate (S2AL) to yield (R)-2,3-dihydroxy-isovalerate. In the isomerase reaction, S2AL is rearranged via a Mg-dependent methyl migration to produce 3-hydroxy-3-methyl-2-ketobutyrate (HMKB). In the reductase reaction, this 2-ketoacid undergoes a metal-dependent reduction by NADPH to yield (R)-2,3-dihydroxy-isovalerate. The sequence is that of Ketol-acid reductoisomerase (NADP(+)) from Beutenbergia cavernae (strain ATCC BAA-8 / DSM 12333 / CCUG 43141 / JCM 11478 / NBRC 16432 / NCIMB 13614 / HKI 0122).